Consider the following 190-residue polypeptide: Nodulation protein L (190 aa).

Belongs to the transferase hexapeptide repeat family.

Its function is as follows. Acetyltransferase implicated in the O-acetylation of Nod factors. The polypeptide is Nodulation protein L (nodL) (Rhizobium leguminosarum bv. viciae).